The following is a 126-amino-acid chain: 3-aminobutyryl-CoA ammonia lyase (126 aa).

This sequence belongs to the KAL family. In terms of assembly, homohexamer.

It catalyses the reaction (3S)-3-aminobutanoyl-CoA = (2E)-butenoyl-CoA + NH4(+). The protein operates within amino-acid degradation; L-lysine degradation via acetate pathway. Its function is as follows. Involved in the anaerobic fermentation of lysine. Catalyzes the deamination of L-3-aminobutyryl-CoA to produce crotonoyl-CoA. The polypeptide is 3-aminobutyryl-CoA ammonia lyase (Acetoanaerobium sticklandii (strain ATCC 12662 / DSM 519 / JCM 1433 / CCUG 9281 / NCIMB 10654 / HF) (Clostridium sticklandii)).